A 478-amino-acid polypeptide reads, in one-letter code: NAD(+) hydrolase ThsA (478 aa).

The 287-residue stretch at 1–287 (MDKKVLIKRF…SIRKKYLRKT (287 aa)) folds into the Deacetylase sirtuin-type domain. Positions 19, 110, and 148 each coordinate NAD(+). Catalysis depends on His-148, which acts as the Proton acceptor. An SLOG (STALD) domain region spans residues 288-478 (IFISGSAVDY…VSLINSIQED (191 aa)). 3'cADPR is bound by residues Gly-292, Ser-293, Leu-330, Arg-373, Lys-390, Gly-401, and Glu-405.

Belongs to the soluble Thoeris ThsA family. Homotetramer in solution.

The enzyme catalyses NAD(+) + H2O = ADP-D-ribose + nicotinamide + H(+). Its activity is regulated as follows. Activated by 3'cADPR. In terms of biological role, NAD(+) hydrolyzing component (NADase) of the Thoeris antiviral defense system, composed of ThsA and ThsB (maybe AS248_15445). Activated by 3' cyclic ADP-D-ribose (3'cADPR) but not its isomers 2'cADPR, cADPR and very weakly by ADPR; binds 3'cADPR better than 2'cADPR. Upon activation binds and hydrolyzes NAD(+), leading to cell death and inhibition of phage replication. The polypeptide is NAD(+) hydrolase ThsA (Enterococcus faecium (Streptococcus faecium)).